Consider the following 302-residue polypeptide: Aspartate carbamoyltransferase catalytic subunit (302 aa).

Positions 51 and 52 each coordinate carbamoyl phosphate. K80 lines the L-aspartate pocket. The carbamoyl phosphate site is built by R101, H129, and Q132. Residues R162 and R224 each coordinate L-aspartate. Residues L263 and P264 each contribute to the carbamoyl phosphate site.

It belongs to the aspartate/ornithine carbamoyltransferase superfamily. ATCase family. In terms of assembly, heterododecamer (2C3:3R2) of six catalytic PyrB chains organized as two trimers (C3), and six regulatory PyrI chains organized as three dimers (R2).

It carries out the reaction carbamoyl phosphate + L-aspartate = N-carbamoyl-L-aspartate + phosphate + H(+). The protein operates within pyrimidine metabolism; UMP biosynthesis via de novo pathway; (S)-dihydroorotate from bicarbonate: step 2/3. Its function is as follows. Catalyzes the condensation of carbamoyl phosphate and aspartate to form carbamoyl aspartate and inorganic phosphate, the committed step in the de novo pyrimidine nucleotide biosynthesis pathway. In Azobacteroides pseudotrichonymphae genomovar. CFP2, this protein is Aspartate carbamoyltransferase catalytic subunit.